The primary structure comprises 680 residues: Pescadillo homolog (680 aa).

The interval 315-336 (GEDEKPKAITNGEGESETPTDA) is disordered. A BRCT domain is found at 359 to 471 (DPSQLFANCT…ELKEPNQYAP (113 aa)). The segment at 494–680 (VPLEEQQTEA…ERKMAKGKAT (187 aa)) is disordered. 3 stretches are compositionally biased toward acidic residues: residues 511-530 (DVED…DDEA), 543-556 (GSDD…EEAD), and 565-576 (AEVDDASEDDEQ). 3 stretches are compositionally biased toward basic and acidic residues: residues 597 to 610 (KASE…DPKS), 617 to 635 (RKEL…ERAK), and 654 to 664 (NKKDAESEKLR). Residues 609 to 680 (KSKAKQQKRK…ERKMAKGKAT (72 aa)) are a coiled coil. Residues 665–680 (EKRRRIERKMAKGKAT) are compositionally biased toward basic residues.

It belongs to the pescadillo family. As to quaternary structure, component of the NOP7 complex, composed of ERB1, NOP7 and YTM1. The complex is held together by ERB1, which interacts with NOP7 via its N-terminal domain and with YTM1 via a high-affinity interaction between the seven-bladed beta-propeller domains of the 2 proteins. The NOP7 complex associates with the 66S pre-ribosome.

The protein resides in the nucleus. It localises to the nucleolus. Its subcellular location is the nucleoplasm. In terms of biological role, component of the NOP7 complex, which is required for maturation of the 25S and 5.8S ribosomal RNAs and formation of the 60S ribosome. This Pyricularia oryzae (strain 70-15 / ATCC MYA-4617 / FGSC 8958) (Rice blast fungus) protein is Pescadillo homolog.